The following is a 272-amino-acid chain: Formamidopyrimidine-DNA glycosylase (272 aa).

The active-site Schiff-base intermediate with DNA is the P2. Catalysis depends on E3, which acts as the Proton donor. K58 acts as the Proton donor; for beta-elimination activity in catalysis. Positions 92, 111, and 153 each coordinate DNA. An FPG-type zinc finger spans residues 238–272 (AVYGRQGQSCPRCGGLVERCRLGQRSTFFCPACQR). Catalysis depends on R262, which acts as the Proton donor; for delta-elimination activity.

This sequence belongs to the FPG family. In terms of assembly, monomer. It depends on Zn(2+) as a cofactor.

The catalysed reaction is Hydrolysis of DNA containing ring-opened 7-methylguanine residues, releasing 2,6-diamino-4-hydroxy-5-(N-methyl)formamidopyrimidine.. It catalyses the reaction 2'-deoxyribonucleotide-(2'-deoxyribose 5'-phosphate)-2'-deoxyribonucleotide-DNA = a 3'-end 2'-deoxyribonucleotide-(2,3-dehydro-2,3-deoxyribose 5'-phosphate)-DNA + a 5'-end 5'-phospho-2'-deoxyribonucleoside-DNA + H(+). In terms of biological role, involved in base excision repair of DNA damaged by oxidation or by mutagenic agents. Acts as a DNA glycosylase that recognizes and removes damaged bases. Has a preference for oxidized purines, such as 7,8-dihydro-8-oxoguanine (8-oxoG). Has AP (apurinic/apyrimidinic) lyase activity and introduces nicks in the DNA strand. Cleaves the DNA backbone by beta-delta elimination to generate a single-strand break at the site of the removed base with both 3'- and 5'-phosphates. This chain is Formamidopyrimidine-DNA glycosylase, found in Laribacter hongkongensis (strain HLHK9).